A 177-amino-acid chain; its full sequence is Large ribosomal subunit protein bL19 (177 aa).

It belongs to the bacterial ribosomal protein bL19 family.

In terms of biological role, this protein is located at the 30S-50S ribosomal subunit interface and may play a role in the structure and function of the aminoacyl-tRNA binding site. This is Large ribosomal subunit protein bL19 from Rhizobium meliloti (strain 1021) (Ensifer meliloti).